Reading from the N-terminus, the 99-residue chain is Small ribosomal subunit protein bS20 (99 aa).

The segment covering methionine 1 to alanine 20 has biased composition (basic residues). The tract at residues methionine 1–alanine 29 is disordered.

Belongs to the bacterial ribosomal protein bS20 family.

Functionally, binds directly to 16S ribosomal RNA. In Paracidovorax citrulli (strain AAC00-1) (Acidovorax citrulli), this protein is Small ribosomal subunit protein bS20.